The primary structure comprises 306 residues: MSNEFITFEKISRESWKTLHQKAKALLTQEELKSITSLNDNISINDVIDIYLPLINLIQVYKIAQENLSFSKSLFLKKDIQLRPFIIGISGSVAVGKSTTSRLLQLLLSRTHPNSQVELVTTDGFLYPNQFLIEQGLLNRKGFPESYNMELLLDFLDSIKNGQTAFAPVYSHDIYDIIPNKKQSFNNPDFLIVEGINVFQNQQNNRLYMSDYFDFSIYIDADSSHIETWYIERFLSILKLAKRDPHNYYAQYAQLPRSEAIAFARNVWKTVNLENLEKFIEPTRNRAELILHKSADHKIDEIYLKK.

91-98 (GSVAVGKS) provides a ligand contact to ATP.

This sequence belongs to the prokaryotic pantothenate kinase family.

It is found in the cytoplasm. The catalysed reaction is (R)-pantothenate + ATP = (R)-4'-phosphopantothenate + ADP + H(+). Its pathway is cofactor biosynthesis; coenzyme A biosynthesis; CoA from (R)-pantothenate: step 1/5. The chain is Pantothenate kinase from Streptococcus pyogenes serotype M49 (strain NZ131).